A 139-amino-acid chain; its full sequence is D-ribose pyranase (139 aa).

Residue His20 is the Proton donor of the active site. Residues Asp28, His106, and 128 to 130 (YAN) each bind substrate.

The protein belongs to the RbsD / FucU family. RbsD subfamily. As to quaternary structure, homodecamer.

The protein resides in the cytoplasm. It catalyses the reaction beta-D-ribopyranose = beta-D-ribofuranose. The protein operates within carbohydrate metabolism; D-ribose degradation; D-ribose 5-phosphate from beta-D-ribopyranose: step 1/2. Catalyzes the interconversion of beta-pyran and beta-furan forms of D-ribose. This Salmonella arizonae (strain ATCC BAA-731 / CDC346-86 / RSK2980) protein is D-ribose pyranase.